A 413-amino-acid polypeptide reads, in one-letter code: Eukaryotic initiation factor 4A-14 (413 aa).

The Q motif motif lies at 40–68 (DSFDAMGLQENLLRGIYAYGFEKPSAIQQ). The region spanning 71 to 241 (IVPFCKGLDV…RKFMSKPVRI (171 aa)) is the Helicase ATP-binding domain. Residue 84 to 91 (AQSGTGKT) participates in ATP binding. A DEAD box motif is present at residues 189 to 192 (DEAD). The 162-residue stretch at 252 to 413 (GIKQFYVNVD…ELPANVADLL (162 aa)) folds into the Helicase C-terminal domain.

The protein belongs to the DEAD box helicase family. eIF4A subfamily. In terms of assembly, eIF4F is a multi-subunit complex, the composition of which varies with external and internal environmental conditions. It is composed of at least EIF4A, EIF4E and EIF4G.

It catalyses the reaction ATP + H2O = ADP + phosphate + H(+). ATP-dependent RNA helicase which is a subunit of the eIF4F complex involved in cap recognition and is required for mRNA binding to ribosome. In the current model of translation initiation, eIF4A unwinds RNA secondary structures in the 5'-UTR of mRNAs which is necessary to allow efficient binding of the small ribosomal subunit, and subsequent scanning for the initiator codon. The polypeptide is Eukaryotic initiation factor 4A-14 (Nicotiana tabacum (Common tobacco)).